We begin with the raw amino-acid sequence, 89 residues long: Small ribosomal subunit protein uS15 (89 aa).

The protein belongs to the universal ribosomal protein uS15 family. As to quaternary structure, part of the 30S ribosomal subunit. Forms a bridge to the 50S subunit in the 70S ribosome, contacting the 23S rRNA.

In terms of biological role, one of the primary rRNA binding proteins, it binds directly to 16S rRNA where it helps nucleate assembly of the platform of the 30S subunit by binding and bridging several RNA helices of the 16S rRNA. Functionally, forms an intersubunit bridge (bridge B4) with the 23S rRNA of the 50S subunit in the ribosome. This chain is Small ribosomal subunit protein uS15, found in Rhizorhabdus wittichii (strain DSM 6014 / CCUG 31198 / JCM 15750 / NBRC 105917 / EY 4224 / RW1) (Sphingomonas wittichii).